A 629-amino-acid chain; its full sequence is Tudor and KH domain-containing protein homolog (629 aa).

Residues 9–29 (LPIALGLSLVTVTAFVAYYVL) traverse the membrane as a helical segment. KH domains follow at residues 46–109 (INTI…ETLI) and 119–185 (IMSE…KKLV). The tract at residues 198 to 240 (IEQSKRPPRHSSSPPSPCPSPGDRDADADAQGDVDHTRVKYKR) is disordered. Basic and acidic residues predominate over residues 219–240 (GDRDADADAQGDVDHTRVKYKR). Residues 297 to 362 (HVSVGQVVAA…CELRADLLRL (66 aa)) enclose the Tudor domain. Positions 464–526 (PAPSPRPSPP…GDDSKDKDGI (63 aa)) are disordered.

Belongs to the Tdrkh family. Interacts with (symmetrically methylated) Siwi. Interacts with (symmetrically methylated) Ago3. Interacts with PNLDC1/trimmer; interaction takes place on the mitochondrial surface and recruits PNLDC1/trimmer to Siwi-bound pre-piRNAs.

Its subcellular location is the mitochondrion outer membrane. In terms of biological role, participates in the primary piRNA biogenesis pathway and is required during spermatogenesis to repress transposable elements and prevent their mobilization, which is essential for the germline integrity. The piRNA metabolic process mediates the repression of transposable elements during meiosis by forming complexes composed of piRNAs and Piwi proteins (Siwi or Ago3) and govern the methylation and subsequent repression of transposons. Required for the final steps of primary piRNA biogenesis by participating in the processing of 31-37 nt intermediates into mature piRNAs: acts by recruiting the exonuclease PNLDC1/trimmer to Siwi-bound pre-piRNAs. In Bombyx mori (Silk moth), this protein is Tudor and KH domain-containing protein homolog.